Reading from the N-terminus, the 551-residue chain is uncharacterized protein (551 aa).

Over residues 1–11 (MRRVSLPNQLN) the composition is skewed to polar residues. Disordered regions lie at residues 1 to 22 (MRRV…TRGE) and 523 to 551 (CDPT…QAFH). The span at 12 to 22 (ETRRRSPTRGE) shows a compositional bias: basic and acidic residues. A compositionally biased stretch (low complexity) spans 537 to 551 (QQPQQQQQQQQQAFH).

The protein to Synechocystis PCC 6803 sll0335 and to M.tuberculosis Rv2567.

This is an uncharacterized protein from Mycobacterium bovis (strain ATCC BAA-935 / AF2122/97).